The sequence spans 210 residues: Putative 3-methyladenine DNA glycosylase (210 aa).

The protein belongs to the DNA glycosylase MPG family.

This is Putative 3-methyladenine DNA glycosylase from Corynebacterium glutamicum (strain R).